The sequence spans 591 residues: Dihydroxyacetone kinase 2 (591 aa).

One can recognise a DhaK domain in the interval 8–344 (SDGNIVTPYL…FDYPTTASGW (337 aa)). Residues 40 to 59 (ASAPNSGNPPKVSLVSGGGS) form a disordered region. Residues 58-61 (GSGH), K109, and D114 each bind substrate. H223 (tele-hemiaminal-histidine intermediate) is an active-site residue. The DhaL domain maps to 384–587 (DTFAKILLAG…LAALLDGFVT (204 aa)). ATP-binding positions include 413–416 (DGDC), 459–460 (TS), 511–512 (TL), and 572–574 (DPG).

This sequence belongs to the dihydroxyacetone kinase (DAK) family.

The enzyme catalyses dihydroxyacetone + ATP = dihydroxyacetone phosphate + ADP + H(+). It catalyses the reaction D-glyceraldehyde + ATP = D-glyceraldehyde 3-phosphate + ADP + H(+). It participates in polyol metabolism; glycerol fermentation; glycerone phosphate from glycerol (oxidative route): step 2/2. In terms of biological role, catalyzes both the phosphorylation of dihydroxyacetone and of glyceraldehyde. This is Dihydroxyacetone kinase 2 (DAK2) from Saccharomyces cerevisiae (strain ATCC 204508 / S288c) (Baker's yeast).